A 195-amino-acid chain; its full sequence is dTTP/UTP pyrophosphatase (195 aa).

Residue Asp73 is the Proton acceptor of the active site.

The protein belongs to the Maf family. YhdE subfamily. Requires a divalent metal cation as cofactor.

It localises to the cytoplasm. The enzyme catalyses dTTP + H2O = dTMP + diphosphate + H(+). It catalyses the reaction UTP + H2O = UMP + diphosphate + H(+). In terms of biological role, nucleoside triphosphate pyrophosphatase that hydrolyzes dTTP and UTP. May have a dual role in cell division arrest and in preventing the incorporation of modified nucleotides into cellular nucleic acids. This chain is dTTP/UTP pyrophosphatase, found in Desulfotalea psychrophila (strain LSv54 / DSM 12343).